A 489-amino-acid polypeptide reads, in one-letter code: Dihydropyrimidinase 1 (489 aa).

3 residues coordinate Zn(2+): histidine 61, histidine 63, and lysine 156. An N6-carboxylysine modification is found at lysine 156. Tyrosine 161 serves as a coordination point for substrate. Positions 189 and 245 each coordinate Zn(2+). Serine 295 contacts substrate. Aspartate 323 lines the Zn(2+) pocket. Asparagine 344 serves as a coordination point for substrate.

The protein belongs to the metallo-dependent hydrolases superfamily. Hydantoinase/dihydropyrimidinase family. In terms of assembly, homotetramer. The cofactor is Zn(2+). Carboxylation allows a single lysine to coordinate two zinc ions.

The protein localises to the nucleus. It catalyses the reaction 5,6-dihydrouracil + H2O = 3-(carbamoylamino)propanoate + H(+). The polypeptide is Dihydropyrimidinase 1 (dhp-1) (Caenorhabditis briggsae).